The primary structure comprises 217 residues: GRB2-related adapter protein (217 aa).

In terms of domain architecture, SH3 1 spans 1–58 (MESVALYSFQATESDELAFNKGDTLKILNMEDDQNWYKAELRGVEGFIPKNYIRVKPH). One can recognise an SH2 domain in the interval 60–154 (WYSGRISRQL…QIFLRDEEPL (95 aa)). The SH3 2 domain occupies 158–217 (PGACFAQAQFDFSAQDPSQLSFRRGDIIEVLERPDPHWWRGRSCGRVGFFPRSYVQPVHL).

Belongs to the GRB2/sem-5/DRK family. In terms of assembly, associates through its SH2 domain with ligand-activated receptors for stem cell factor (KIT) and erythropoietin (EPOR). Also forms a stable complex with the Bcr-Abl oncoprotein. GRAP is associated with the Ras guanine nucleotide exchange factor SOS1, primarily through its N-terminal SH3 domain. Interacts with phosphorylated LAT upon TCR activation. Interacts with SHB.

It is found in the membrane. Its subcellular location is the synapse. Functionally, couples signals from receptor and cytoplasmic tyrosine kinases to the Ras signaling pathway. Plays a role in the inner ear and in hearing. The polypeptide is GRB2-related adapter protein (Homo sapiens (Human)).